We begin with the raw amino-acid sequence, 558 residues long: Putative polypeptide N-acetylgalactosaminyltransferase 13 (558 aa).

Residues 1 to 12 (MHAGGKYCGPRH) lie on the Cytoplasmic side of the membrane. Residues 13–32 (CSFYIIAFLICQLFFLVIFI) form a helical; Signal-anchor for type II membrane protein membrane-spanning segment. Residues 33–558 (RNDDASSANE…QFALEMEGQT (526 aa)) lie on the Lumenal side of the membrane. Residues N48 and N111 are each glycosylated (N-linked (GlcNAc...) asparagine). Cystine bridges form between C97–C335, C326–C412, C445–C460, and C484–C498. The segment at 109-225 (EANVSVVISF…EGWLEPLLER (117 aa)) is catalytic subdomain A. 2 residues coordinate substrate: D150 and R186. D209 contributes to the Mn(2+) binding site. Position 210 (S210) interacts with substrate. H211 provides a ligand contact to Mn(2+). The segment at 281–343 (PYQSPAFAGG…PCSRIGHIFR (63 aa)) is catalytic subdomain B. W312 serves as a coordination point for substrate. A Mn(2+)-binding site is contributed by H340. Residues R343 and H346 each contribute to the substrate site. The region spanning 422–556 (VSPELRMHFD…SFQFALEMEG (135 aa)) is the Ricin B-type lectin domain. An N-linked (GlcNAc...) asparagine glycan is attached at N501. C525 and C539 are oxidised to a cystine.

Belongs to the glycosyltransferase 2 family. GalNAc-T subfamily. Mn(2+) is required as a cofactor. During embryonic stages 16-17, very weak expression in the midgut.

It is found in the golgi apparatus membrane. It carries out the reaction L-seryl-[protein] + UDP-N-acetyl-alpha-D-galactosamine = a 3-O-[N-acetyl-alpha-D-galactosaminyl]-L-seryl-[protein] + UDP + H(+). The catalysed reaction is L-threonyl-[protein] + UDP-N-acetyl-alpha-D-galactosamine = a 3-O-[N-acetyl-alpha-D-galactosaminyl]-L-threonyl-[protein] + UDP + H(+). The protein operates within protein modification; protein glycosylation. In terms of biological role, may catalyze the initial reaction in O-linked oligosaccharide biosynthesis, the transfer of an N-acetyl-D-galactosamine residue to a serine or threonine residue on the protein receptor. The chain is Putative polypeptide N-acetylgalactosaminyltransferase 13 (pgant13) from Drosophila melanogaster (Fruit fly).